A 1305-amino-acid polypeptide reads, in one-letter code: Myosin-IIIb (1305 aa).

The 267-residue stretch at 15–281 (WEIIETIGKG…VTHLLDHPFI (267 aa)) folds into the Protein kinase domain. ATP-binding positions include 21 to 29 (IGKGTYGKV) and Lys-44. Residue Asp-144 is the Proton acceptor of the active site. The Myosin motor domain occupies 331–1046 (CLEDDLVNLE…HVEQLNLLLR (716 aa)). The actin-binding stretch occupies residues 927–949 (LMDLLSKMVVGQPHFIRCIKPND). 2 consecutive IQ domains span residues 1048 to 1077 (VMGR…KREK) and 1075 to 1104 (REKG…RRSE). Disordered stretches follow at residues 1093-1164 (RKLK…VTSG) and 1200-1233 (SPCE…MLSS).

In the C-terminal section; belongs to the TRAFAC class myosin-kinesin ATPase superfamily. Myosin family. The protein in the N-terminal section; belongs to the protein kinase superfamily. STE Ser/Thr protein kinase family. In terms of assembly, interacts (via C-terminus) with ESPN. Interacts (via C-terminus) with ESPNL. As to expression, expressed in the cochlear hair cells (at protein level). Expressed in utricle hair bundles (at protein level).

It localises to the cytoplasm. The protein resides in the cytoskeleton. It is found in the cell projection. Its subcellular location is the stereocilium. The catalysed reaction is L-seryl-[protein] + ATP = O-phospho-L-seryl-[protein] + ADP + H(+). The enzyme catalyses L-threonyl-[protein] + ATP = O-phospho-L-threonyl-[protein] + ADP + H(+). Probable actin-based motor with a protein kinase activity. Required for normal cochlear hair bundle development and hearing. Plays an important role in the early steps of cochlear hair bundle morphogenesis. Influences the number and lengths of stereocilia to be produced and limits the growth of microvilli within the forming auditory hair bundles thereby contributing to the architecture of the hair bundle, including its staircase pattern. Involved in the elongation of actin in stereocilia tips by transporting the actin regulatory factor ESPN to the plus ends of actin filaments. The polypeptide is Myosin-IIIb (Myo3b) (Mus musculus (Mouse)).